A 300-amino-acid chain; its full sequence is Lysenin-related protein 2 (300 aa).

An N-terminal cap domain region spans residues 12–35; sequence EQIEVDVVAVWKEGYVYENRGSTS. A beta-hairpin domain region spans residues 36-109; that stretch reads VEQKIKITKG…SKEIEHTITI (74 aa). Positions 110-158 are N-terminal cap domain; the sequence is PPTSKFTRWQLNADVGGADIEYMYLIDEVTPIGGTLSIPQVIKSRAKIL. The segment at 159 to 299 is C-terminal receptor-binding domain; sequence VGREIYLGET…EDKWILEVVK (141 aa). Residues Lys-187, Ser-229, Tyr-235, and Tyr-284 each coordinate an N-(acyl)-sphingosylphosphocholine. Cys-274 and Cys-285 form a disulfide bridge.

Belongs to the lysenin family. Binds to sphingomyelin as a monomer by using its C-terminal domain. Forms a nonamer when sphingomyelin/LRP-2 ratio is lower than ca 500. Oligomerization, but not binding, is influenced by the fluidity of sphingomyelin. Expressed by coelomocytes.

It localises to the secreted. The protein localises to the target cell membrane. Its function is as follows. Pore-forming toxin that specifically binds sphingomyelin in the plasma membrane of various cells. Has hemolytic activity. It also has antibacterial activities against B.megaterium. This Eisenia fetida (Red wiggler worm) protein is Lysenin-related protein 2.